The sequence spans 125 residues: Small ribosomal subunit protein bS6 (125 aa).

The tract at residues 99-125 (ASPMVKAKDERRASAEVENNDFEDAEE) is disordered. The segment covering 104 to 113 (KAKDERRASA) has biased composition (basic and acidic residues). The span at 116–125 (ENNDFEDAEE) shows a compositional bias: acidic residues.

Belongs to the bacterial ribosomal protein bS6 family.

Functionally, binds together with bS18 to 16S ribosomal RNA. This is Small ribosomal subunit protein bS6 from Mannheimia succiniciproducens (strain KCTC 0769BP / MBEL55E).